We begin with the raw amino-acid sequence, 1013 residues long: Poly [ADP-ribose] polymerase 1 (1013 aa).

Ala-2 carries the N-acetylalanine modification. Residues 9–93 (YRVEYAKSGR…KVKKTAEAGG (85 aa)) form a PARP-type 1 zinc finger. Cys-21 and Cys-24 together coordinate Zn(2+). Ser-41 carries the phosphoserine modification. Zn(2+)-binding residues include His-53 and Cys-56. N6-acetyllysine is present on residues Lys-97 and Lys-105. The PARP-type 2 zinc-finger motif lies at 113 to 203 (FAAEYAKSNR…VLKKQLPGVK (91 aa)). Cys-125 and Cys-128 together coordinate Zn(2+). Position 131 is an N6-acetyllysine (Lys-131). Residues His-159 and Cys-162 each coordinate Zn(2+). Phosphoserine occurs at positions 177, 179, and 185. Lys-192 participates in a covalent cross-link: Glycyl lysine isopeptide (Lys-Gly) (interchain with G-Cter in SUMO2). The interval 198–233 (QLPGVKSEGKRKGDEVDGADEVAKKKSKKGKDKDSK) is disordered. Residue Lys-203 forms a Glycyl lysine isopeptide (Lys-Gly) (interchain with G-Cter in SUMO1); alternate linkage. A Glycyl lysine isopeptide (Lys-Gly) (interchain with G-Cter in SUMO2); alternate cross-link involves residue Lys-203. 2 short sequence motifs (nuclear localization signal) span residues 207–209 (KRK) and 221–226 (KKKSKK). The region spanning 225-359 (KKGKDKDSKL…VKKQDRIFPP (135 aa)) is the PADR1 zinc-binding domain. Lys-249 is covalently cross-linked (Glycyl lysine isopeptide (Lys-Gly) (interchain with G-Cter in SUMO2)). A phosphoserine mark is found at Ser-274 and Ser-277. The interval 290–332 (GALLPCKECSGQLVFKSDAYYCTGDVTAWTKCMVKTQTPSRKE) is zinc ribbon. Positions 295, 298, 311, and 321 each coordinate Zn(2+). Positions 357–383 (FPPETSAPAPPHLPPSVTSAPTAVNSS) are disordered. The segment covering 372–383 (SVTSAPTAVNSS) has biased composition (polar residues). The interval 373–523 (VTSAPTAVNS…GVNKSEKRMK (151 aa)) is automodification domain. Positions 385-476 (PADKPLSNMK…KSLQELLSAH (92 aa)) constitute a BRCT domain. Residue Asp-387 is modified to PolyADP-ribosyl aspartic acid. Residues Glu-407, Glu-413, Glu-435, Glu-437, Glu-444, Glu-445, and Glu-456 each carry the polyADP-ribosyl glutamic acid modification. Lys-467 is covalently cross-linked (Glycyl lysine isopeptide (Lys-Gly) (interchain with G-Cter in SUMO2)). PolyADP-ribosyl glutamic acid is present on residues Glu-471 and Glu-484. A Glycyl lysine isopeptide (Lys-Gly) (interchain with G-Cter in SUMO1); alternate cross-link involves residue Lys-486. A Glycyl lysine isopeptide (Lys-Gly) (interchain with G-Cter in SUMO2); alternate cross-link involves residue Lys-486. A polyADP-ribosyl glutamic acid mark is found at Glu-488 and Glu-491. Residues 495–516 (PKGKSAAPSKKSKGLYKEEGVN) are disordered. Residues Ser-499, Ser-503, and Ser-506 each carry the ADP-ribosylserine modification. Residue Lys-511 forms a Glycyl lysine isopeptide (Lys-Gly) (interchain with G-Cter in SUMO2) linkage. PolyADP-ribosyl glutamic acid occurs at positions 512 and 513. The residue at position 518 (Ser-518) is an ADP-ribosylserine. PolyADP-ribosyl glutamic acid is present on Glu-519. At Lys-520 the chain carries N6-(ADP-ribosyl)lysine. Residue Lys-527 forms a Glycyl lysine isopeptide (Lys-Gly) (interchain with G-Cter in SUMO2) linkage. The WGR domain occupies 541–637 (SAHVLEKGGK…KNFTKYPKKF (97 aa)). Phosphothreonine is present on Thr-593. N6-acetyllysine is present on residues Lys-599 and Lys-620. One can recognise a PARP alpha-helical domain in the interval 661–778 (KSKLPKAVQE…DIEVAYSLLR (118 aa)). Residue Lys-747 forms a Glycyl lysine isopeptide (Lys-Gly) (interchain with G-Cter in SUMO1); alternate linkage. A Glycyl lysine isopeptide (Lys-Gly) (interchain with G-Cter in SUMO2); alternate cross-link involves residue Lys-747. Ser-781 and Ser-785 each carry phosphoserine. Positions 787 to 1013 (DPIDVNYEKL…LKFNFKTSLW (227 aa)) constitute a PARP catalytic domain. Residues 861–863 (HGS), Gly-870, Arg-877, and Ser-903 contribute to the NAD(+) site. Glu-987 functions as the For poly [ADP-ribose] polymerase activity in the catalytic mechanism.

This sequence belongs to the ARTD/PARP family. In terms of assembly, homodimer; PARP-type zinc-fingers from separate PARP1 molecules form a dimer module that specifically recognizes DNA strand breaks. Heterodimer; heterodimerizes with PARP2. Interacts (via the PARP catalytic domain) with HPF1. Interacts with NMNAT1. Interacts with nucleosomes; with a preference for nucleosomes containing H2A.X. Interacts with APTX. Component of a base excision repair (BER) complex, containing at least XRCC1, PARP1, PARP2, POLB and LRIG3. Interacts with SRY. The SWAP complex consists of NPM1, NCL, PARP1 and SWAP70. Interacts with TIAM2. Interacts with PARP3; leading to activate PARP1 in absence of DNA. Interacts (when poly-ADP-ribosylated) with CHD1L (via macro domain). Interacts with the DNA polymerase alpha catalytic subunit POLA1; this interaction functions as part of the control of replication fork progression. Interacts with EEF1A1 and TXK. Interacts with RNF4. Interacts with RNF146. Interacts with ZNF423. Interacts with APLF. Interacts with SNAI1 (via zinc fingers); the interaction requires SNAI1 to be poly-ADP-ribosylated and non-phosphorylated (active) by GSK3B. Interacts (when poly-ADP-ribosylated) with PARP9. Interacts with NR4A3; activates PARP1 by improving acetylation of PARP1 and suppressing the interaction between PARP1 and SIRT1. Interacts (via catalytic domain) with PUM3; the interaction inhibits the poly-ADP-ribosylation activity of PARP1 and the degradation of PARP1 by CASP3 following genotoxic stress. Interacts with ZNF365. Interacts with RRP1B. Interacts with TIMELESS; the interaction is direct. Interacts with CGAS; leading to impede the formation of the PARP1-TIMELESS complex. Interacts with KHDC3L, the interaction is increased following the formation of DNA double-strand breaks. Interacts (when auto-poly-ADP-ribosylated) with XRCC1; leading to inhibit PARP1 ADP-ribosyltransferase activity. Interacts with SPINDOC; promoting PARP1 ADP-ribosyltransferase activity. Interacts with BANF1; leading to inhibit PARP1 ADP-ribosyltransferase activity in response to oxidative DNA damage. Interacts (when sumoylated and ubiquitinated) with VCP/p97; leading to its extraction from chromatin. Interacts with YARS1; promoting PARP1 ADP-ribosyltransferase activity. Interacts with PACMP micropeptide; Interacts with PACMP micropeptide; interaction. Interacts (when poly-ADP-ribosylated) with isoform 1 of MACROH2A1; MACROH2A1 specifically binds to poly-ADP-ribose chains and inhibits PARP1 activity, limiting the consumption of nuclear NAD(+). Interacts with CARM1; promoting recruitment to replication forks. Interacts with RECQL. Interacts with ZNF32; the interaction reshapes ZNF432 interacting proteins. Interacts with TPRN; TPRN interacts with a number of DNA damage response proteins, is recruited to sites of DNA damage and may play a role in DNA damage repair. Interacts (when auto-poly-ADP-ribosylated) with AIFM1. Post-translationally, poly-ADP-ribosylated on serine, glutamate and aspartate residues by autocatalysis. Auto-ADP-ribosylation on serine takes place following interaction with HPF1. Auto poly-ADP-ribosylation on serine residues promotes its dissociation from chromatin. Poly-ADP-ribosylated by PARP2; poly-ADP-ribosylation mediates the recruitment of CHD1L to DNA damage sites. Mono-ADP-ribosylated at Lys-520 by SIRT6 in response to oxidative stress, promoting recruitment to double-strand breaks (DSBs) sites. S-nitrosylated, leading to inhibit transcription regulation activity. In terms of processing, phosphorylated at Thr-593 by PRKDC in response to DNA damage following virus infection, promoting its translocation to the cytosol. Phosphorylated by TXK. Post-translationally, proteolytically cleaved by caspase-3 (CASP3) and caspase-7 (CASP7) in response to apoptosis to generate the Poly [ADP-ribose] polymerase 1, processed N-terminus and Poly [ADP-ribose] polymerase 1, processed C-terminus forms. Sumoylated with SUMO1 or SUMO2 by PIAS4 following prolonged residence (trapping) to chromatin. Sumoylation promotes ubiquitination by RNF4 and removal from chromatin by VCP/p97. In terms of processing, ubiquitinated by RNF4 following sumoylation by PIAS4 in response to prolonged residence (trapping) to chromatin. Ubiquitination promotes removal from chromatin by VCP/p97.

Its subcellular location is the chromosome. It is found in the nucleus. It localises to the nucleolus. The protein localises to the cytoplasm. The protein resides in the cytosol. It carries out the reaction NAD(+) + (ADP-D-ribosyl)n-acceptor = nicotinamide + (ADP-D-ribosyl)n+1-acceptor + H(+).. The enzyme catalyses L-seryl-[protein] + NAD(+) = O-(ADP-D-ribosyl)-L-seryl-[protein] + nicotinamide + H(+). It catalyses the reaction L-aspartyl-[protein] + NAD(+) = 4-O-(ADP-D-ribosyl)-L-aspartyl-[protein] + nicotinamide. The catalysed reaction is L-glutamyl-[protein] + NAD(+) = 5-O-(ADP-D-ribosyl)-L-glutamyl-[protein] + nicotinamide. It carries out the reaction L-tyrosyl-[protein] + NAD(+) = O-(ADP-D-ribosyl)-L-tyrosyl-[protein] + nicotinamide + H(+). The enzyme catalyses L-histidyl-[protein] + NAD(+) = N(tele)-(ADP-D-ribosyl)-L-histidyl-[protein] + nicotinamide + H(+). Its activity is regulated as follows. ADP-ribosyltransferase activity is regulated via an allosteric activation mechanism. In absence of activation signal, PARP1 is autoinhibited by the PARP alpha-helical domain (also named HD region), which prevents effective NAD(+)-binding. Activity is highly stimulated by signals, such as DNA strand breaks. Binding to damaged DNA unfolds the PARP alpha-helical domain, relieving autoinhibition. Poly-ADP-ribosyltransferase activity is tightly regulated and PARP1 is removed from damaged chromatin following initial poly-ADP-ribosylation of chromatin to avoid prolonged residence (trapping) that has cytotoxic consequences. A number of factors (VCP/p97) or post-translational modifications (auto-poly-ADP-ribosylation or ubiquitination) promote PARP1 removal from chromatin. Poly-ADP-ribosyltransferase that mediates poly-ADP-ribosylation of proteins and plays a key role in DNA repair. Mediates glutamate, aspartate, serine, histidine or tyrosine ADP-ribosylation of proteins: the ADP-D-ribosyl group of NAD(+) is transferred to the acceptor carboxyl group of target residues and further ADP-ribosyl groups are transferred to the 2'-position of the terminal adenosine moiety, building up a polymer with an average chain length of 20-30 units. Serine ADP-ribosylation of proteins constitutes the primary form of ADP-ribosylation of proteins in response to DNA damage. Specificity for the different amino acids is conferred by interacting factors, such as HPF1 and NMNAT1. Following interaction with HPF1, catalyzes serine ADP-ribosylation of target proteins; HPF1 confers serine specificity by completing the PARP1 active site. Also catalyzes tyrosine ADP-ribosylation of target proteins following interaction with HPF1. Following interaction with NMNAT1, catalyzes glutamate and aspartate ADP-ribosylation of target proteins; NMNAT1 confers glutamate and aspartate specificity. PARP1 initiates the repair of DNA breaks: recognizes and binds DNA breaks within chromatin and recruits HPF1, licensing serine ADP-ribosylation of target proteins, such as histones (H2BS6ADPr and H3S10ADPr), thereby promoting decompaction of chromatin and the recruitment of repair factors leading to the reparation of DNA strand breaks. HPF1 initiates serine ADP-ribosylation but restricts the polymerase activity of PARP1 in order to limit the length of poly-ADP-ribose chains. In addition to base excision repair (BER) pathway, also involved in double-strand breaks (DSBs) repair: together with TIMELESS, accumulates at DNA damage sites and promotes homologous recombination repair by mediating poly-ADP-ribosylation. Mediates the poly-ADP-ribosylation of a number of proteins, including itself, APLF, CHFR and NFAT5. In addition to proteins, also able to ADP-ribosylate DNA: catalyzes ADP-ribosylation of DNA strand break termini containing terminal phosphates and a 2'-OH group in single- and double-stranded DNA, respectively. Required for PARP9 and DTX3L recruitment to DNA damage sites. PARP1-dependent PARP9-DTX3L-mediated ubiquitination promotes the rapid and specific recruitment of 53BP1/TP53BP1, UIMC1/RAP80, and BRCA1 to DNA damage sites. PARP1-mediated DNA repair in neurons plays a role in sleep: senses DNA damage in neurons and promotes sleep, facilitating efficient DNA repair. In addition to DNA repair, also involved in other processes, such as transcription regulation, programmed cell death, membrane repair, adipogenesis and innate immunity. Acts as a repressor of transcription: binds to nucleosomes and modulates chromatin structure in a manner similar to histone H1, thereby altering RNA polymerase II. Acts both as a positive and negative regulator of transcription elongation, depending on the context. Acts as a positive regulator of transcription elongation by mediating poly-ADP-ribosylation of NELFE, preventing RNA-binding activity of NELFE and relieving transcription pausing. Acts as a negative regulator of transcription elongation in response to DNA damage by catalyzing poly-ADP-ribosylation of CCNT1, disrupting the phase separation activity of CCNT1 and subsequent activation of CDK9. Involved in replication fork progression following interaction with CARM1: mediates poly-ADP-ribosylation at replication forks, slowing fork progression. Poly-ADP-ribose chains generated by PARP1 also play a role in poly-ADP-ribose-dependent cell death, a process named parthanatos. Also acts as a negative regulator of the cGAS-STING pathway. Acts by mediating poly-ADP-ribosylation of CGAS: PARP1 translocates into the cytosol following phosphorylation by PRKDC and catalyzes poly-ADP-ribosylation and inactivation of CGAS. Acts as a negative regulator of adipogenesis: catalyzes poly-ADP-ribosylation of histone H2B on 'Glu-35' (H2BE35ADPr) following interaction with NMNAT1, inhibiting phosphorylation of H2B at 'Ser-36' (H2BS36ph), thereby blocking expression of pro-adipogenetic genes. Involved in the synthesis of ATP in the nucleus, together with NMNAT1, PARG and NUDT5. Nuclear ATP generation is required for extensive chromatin remodeling events that are energy-consuming. Functionally, promotes AIFM1-mediated apoptosis. This form, which translocates into the cytoplasm following cleavage by caspase-3 (CASP3) and caspase-7 (CASP7) in response to apoptosis, is auto-poly-ADP-ribosylated and serves as a poly-ADP-ribose carrier to induce AIFM1-mediated apoptosis. Its function is as follows. This cleavage form irreversibly binds to DNA breaks and interferes with DNA repair, promoting DNA damage-induced apoptosis. The chain is Poly [ADP-ribose] polymerase 1 (PARP1) from Cricetulus griseus (Chinese hamster).